A 212-amino-acid polypeptide reads, in one-letter code: 3-isopropylmalate dehydratase small subunit (212 aa).

The protein belongs to the LeuD family. LeuD type 1 subfamily. As to quaternary structure, heterodimer of LeuC and LeuD.

It carries out the reaction (2R,3S)-3-isopropylmalate = (2S)-2-isopropylmalate. It participates in amino-acid biosynthesis; L-leucine biosynthesis; L-leucine from 3-methyl-2-oxobutanoate: step 2/4. In terms of biological role, catalyzes the isomerization between 2-isopropylmalate and 3-isopropylmalate, via the formation of 2-isopropylmaleate. The chain is 3-isopropylmalate dehydratase small subunit from Nitrosomonas eutropha (strain DSM 101675 / C91 / Nm57).